The primary structure comprises 251 residues: MIRVNSLQVDSRLLPLSLQANAGEVWHVIGPNGCGKSTLLAALAGMIPFSGSVQVGGLNVSQASLSELARHRAYLAQNDKPSFQLHVFQYLALSVPANVALERSEVASEIDQISRLLNIDDKLHRSIHQLSGGEWQRVRLAGSCLQVSPVLNPSARLLIWDEPAAPLDIAQESLLYRLIERMAGQGLTVIMANHDLNRTLRHADQVLLLSRGVLYRAGSAKEVLTQEVLQSVFGTSIRRVELEGHPHLLFD.

Positions 2-236 (IRVNSLQVDS…EVLQSVFGTS (235 aa)) constitute an ABC transporter domain. 30–37 (GPNGCGKS) contributes to the ATP binding site.

Belongs to the ABC transporter superfamily. Vitamin B12 importer (TC 3.A.1.13.1) family. In terms of assembly, the complex is composed of two ATP-binding proteins (BtuD), two transmembrane proteins (BtuC) and a solute-binding protein (BtuF).

Its subcellular location is the cell inner membrane. It catalyses the reaction an R-cob(III)alamin(out) + ATP + H2O = an R-cob(III)alamin(in) + ADP + phosphate + H(+). Functionally, part of the ABC transporter complex BtuCDF involved in vitamin B12 import. Responsible for energy coupling to the transport system. The chain is Vitamin B12 import ATP-binding protein BtuD from Vibrio cholerae serotype O1 (strain ATCC 39541 / Classical Ogawa 395 / O395).